Reading from the N-terminus, the 209-residue chain is Protein-L-isoaspartate O-methyltransferase (209 aa).

The active site involves Ser59.

This sequence belongs to the methyltransferase superfamily. L-isoaspartyl/D-aspartyl protein methyltransferase family.

The protein localises to the cytoplasm. It carries out the reaction [protein]-L-isoaspartate + S-adenosyl-L-methionine = [protein]-L-isoaspartate alpha-methyl ester + S-adenosyl-L-homocysteine. In terms of biological role, catalyzes the methyl esterification of L-isoaspartyl residues in peptides and proteins that result from spontaneous decomposition of normal L-aspartyl and L-asparaginyl residues. It plays a role in the repair and/or degradation of damaged proteins. This Helicobacter pylori (strain P12) protein is Protein-L-isoaspartate O-methyltransferase.